We begin with the raw amino-acid sequence, 648 residues long: MNARVEQLEFQAEARQLLDLMIHSVYSNKDSFLRELISNASDALDKLRIEAFRNKDLEVDTSDLHIETEADKGARTLTVRDNGIGMTRAEVVDLIGTLAKSGTAELRAQLREAKNDAASEELIGQFGIGFYSSFMVADKVELLTRKAGESEATKWESSGEGTYTIESVEGAPQGTSVTLHLKPEDAEDELYDYTADWKLRHLIKKYSDFIAWPIRMEVEKRVPAPHEEGEEPGEETVVLETETLNSMKALWARPKDEVSADEYNEFYKHIAHAWDDPMEVIAMKAEGTFEYQALLFIPSHAQHDLFNRDAVFGIQLYVKRVFIMGDCDQLMPEYLRFVKGVVDAQDMSLNVSREILQQDRQIKAIRRRLTKKVLSTIKDLQSERPEDYRTFWTQFGKVVKEGLLADFDNRETLLEISSFASTHSEEEPTTLAGYVERMKEDQTQIFFATGDSRQQILKSPHLEAFRAKGYEVLLLTEPVDEVWVGVVNEFDGKPLQSVAKGEVDLDSDGEGSEAEREEQQKEFADLLGWLKETLGEQVKEVRLSTRLTESPACLITDTFGITPALARIYRATGQDVPVGKRTLELNPTHPLVIGLRQAQASADDDAKKEAVSETAELLYGTALLAEGGAPDDPARFAELLADRLTRTL.

Residues 1–353 form an a; substrate-binding region; sequence MNARVEQLEF…AQDMSLNVSR (353 aa). Residues 354-567 are b; the sequence is EILQQDRQIK…TFGITPALAR (214 aa). The tract at residues 568–648 is c; it reads IYRATGQDVP…LLADRLTRTL (81 aa).

This sequence belongs to the heat shock protein 90 family. In terms of assembly, homodimer.

The protein localises to the cytoplasm. In terms of biological role, molecular chaperone. Has ATPase activity. In Mycobacterium ulcerans (strain Agy99), this protein is Chaperone protein HtpG.